A 48-amino-acid polypeptide reads, in one-letter code: uncharacterized protein (48 aa).

Residues 18–38 (IIIKYWYIDLTITIFAFLILY) traverse the membrane as a helical segment.

Its subcellular location is the host membrane. This is an uncharacterized protein from Acidianus bottle-shaped virus (isolate Italy/Pozzuoli) (ABV).